Reading from the N-terminus, the 544-residue chain is Bacillolysin (544 aa).

An N-terminal signal peptide occupies residues 1–25; the sequence is MNKRAMLGAIGLAFGLMAWPFGASA. The propeptide at 26-225 is activation peptide; the sequence is KGKSMVWNEQ…DEAKPGGAQP (200 aa). The Ca(2+) site is built by Asp285, Asp287, Gln289, and Asp366. Zn(2+) is bound at residue His370. Glu371 is an active-site residue. The Zn(2+) site is built by His374 and Glu394. Positions 405, 411, 413, 415, 418, 421, 422, 425, and 428 each coordinate Ca(2+). His459 functions as the Proton donor in the catalytic mechanism.

This sequence belongs to the peptidase M4 family. The cofactor is Ca(2+). Zn(2+) serves as cofactor.

It localises to the secreted. It carries out the reaction Similar, but not identical, to that of thermolysin.. Its function is as follows. Extracellular zinc metalloprotease. The sequence is that of Bacillolysin (npr) from Bacillus caldolyticus.